The chain runs to 61 residues: Large ribosomal subunit protein bL32 (61 aa).

Belongs to the bacterial ribosomal protein bL32 family.

In Ehrlichia canis (strain Jake), this protein is Large ribosomal subunit protein bL32.